The primary structure comprises 31 residues: Nemertide alpha-7 (31 aa).

Disulfide bonds link C2–C16, C9–C20, and C15–C26. Residue P29 is modified to 4-hydroxyproline.

It belongs to the nemertide family. In terms of tissue distribution, confined to the epidermis and to the mucus layer.

The protein localises to the secreted. Functionally, potent toxin, demonstrating strong inhibitory effects on insect sodium channels (Nav) and reduced activity on mammalian sodium channels. Potently inhibits inactivation of insect sodium channels of B.germanica (BgNav1) (EC(50)=9.5 nM). The toxin also delays the inactivation of most mammalian Nav (human Nav1.1/SCN1A; EC(50)=171.5 nM, rat Nav1.2/SCN2A; EC(50)=50.4 nM, rat Nav1.3/SCN3A; EC(50)=170.2 nM, rat Nav1.4/SCN4A; EC(50)=810.6 nM, human Nav1.5/SCN5A; EC(50)=155.6 nM, mouse Nav1.6/SCN8A; EC(50)=147.6 nM, human Nav1.9/SCN9A; EC(50)=129 nM). Inactivation is completely prevented by a concentration of 1 uM, resulting in sustained, non-inactivating currents. In addition, the toxin significantly enhances the recovery from inactivation, and the open state is not required for the toxin to interact with the channel. In vivo, injection into brine shrimp (Artemia salina) stops movement or causes death after 24 hours (EC(50)=6.1 uM). The sequence is that of Nemertide alpha-7 from Lineus ruber (Red bootlace).